We begin with the raw amino-acid sequence, 152 residues long: Endoribonuclease YbeY (152 aa).

Zn(2+) is bound by residues His118, His122, and His128.

This sequence belongs to the endoribonuclease YbeY family. Zn(2+) is required as a cofactor.

Its subcellular location is the cytoplasm. Its function is as follows. Single strand-specific metallo-endoribonuclease involved in late-stage 70S ribosome quality control and in maturation of the 3' terminus of the 16S rRNA. The sequence is that of Endoribonuclease YbeY from Lacticaseibacillus casei (strain BL23) (Lactobacillus casei).